Reading from the N-terminus, the 84-residue chain is Large ribosomal subunit protein bL27 (84 aa).

The tract at residues 1–21 (MAHKKGASSTRNGRDSNAQRL) is disordered. The span at 7–19 (ASSTRNGRDSNAQ) shows a compositional bias: polar residues.

Belongs to the bacterial ribosomal protein bL27 family.

The chain is Large ribosomal subunit protein bL27 from Clavibacter michiganensis subsp. michiganensis (strain NCPPB 382).